Here is a 153-residue protein sequence, read N- to C-terminus: D-aminoacyl-tRNA deacylase (153 aa).

A Gly-cisPro motif, important for rejection of L-amino acids motif is present at residues 142–143 (GP).

It belongs to the DTD family. In terms of assembly, homodimer.

The protein resides in the cytoplasm. The catalysed reaction is glycyl-tRNA(Ala) + H2O = tRNA(Ala) + glycine + H(+). It catalyses the reaction a D-aminoacyl-tRNA + H2O = a tRNA + a D-alpha-amino acid + H(+). Its function is as follows. An aminoacyl-tRNA editing enzyme that deacylates mischarged D-aminoacyl-tRNAs. Also deacylates mischarged glycyl-tRNA(Ala), protecting cells against glycine mischarging by AlaRS. Acts via tRNA-based rather than protein-based catalysis; rejects L-amino acids rather than detecting D-amino acids in the active site. By recycling D-aminoacyl-tRNA to D-amino acids and free tRNA molecules, this enzyme counteracts the toxicity associated with the formation of D-aminoacyl-tRNA entities in vivo and helps enforce protein L-homochirality. The protein is D-aminoacyl-tRNA deacylase of Cupriavidus necator (strain ATCC 17699 / DSM 428 / KCTC 22496 / NCIMB 10442 / H16 / Stanier 337) (Ralstonia eutropha).